The chain runs to 551 residues: Endolytic murein transglycosylase (551 aa).

The Cytoplasmic portion of the chain corresponds to 1–187; it reads MSEKSREEEK…PKKEKKSHVK (187 aa). The disordered stretch occupies residues 38–180; sequence VRTPANEPSA…EGAKPAKPKK (143 aa). Low complexity-rich tracts occupy residues 100-110 and 145-157; these read PSSPAEESGSR and QAGPETPTPATET. A compositionally biased stretch (basic and acidic residues) spans 159 to 174; the sequence is DIIRDTSRRSRREGAK. Residues 188–208 form a helical membrane-spanning segment; the sequence is AFVISFLVFLALLSAGGYFGY. Residues 209 to 551 lie on the Extracellular side of the membrane; that stretch reads QYVLDSLLPI…VAEHVNSKLN (343 aa).

It belongs to the transglycosylase MltG family.

Its subcellular location is the cell membrane. The catalysed reaction is a peptidoglycan chain = a peptidoglycan chain with N-acetyl-1,6-anhydromuramyl-[peptide] at the reducing end + a peptidoglycan chain with N-acetylglucosamine at the non-reducing end.. In terms of biological role, functions as a peptidoglycan terminase that cleaves nascent peptidoglycan strands endolytically to terminate their elongation. Involved in peripheral peptidoglycan (PG) synthesis. This chain is Endolytic murein transglycosylase, found in Streptococcus pneumoniae serotype 2 (strain D39 / NCTC 7466).